The following is a 1088-amino-acid chain: DNA damage-binding protein 1b (1088 aa).

It belongs to the DDB1 family. Interacts with DDA1. Binds to KTN80.2/DWA3. Interacts with HTD1.

The protein localises to the nucleus. Its pathway is protein modification; protein ubiquitination. Functionally, component of light signal transduction machinery. Involved in repression of photomorphogenesis in darkness. Plays a role in DNA repair by forming with DDB2 the UV-damaged DNA-binding protein complex (UV-DDB). The sequence is that of DNA damage-binding protein 1b from Arabidopsis thaliana (Mouse-ear cress).